Consider the following 189-residue polypeptide: Adenylate kinase (189 aa).

ATP is bound at residue 10 to 15; that stretch reads AAGKGT. The segment at 30–59 is NMP; it reads STGDMLRAAIASGSELGQKVKGVLDRGELV. Residues Thr31, Arg36, 57–59, 85–88, and Gln92 contribute to the AMP site; these read ELV and GFPR. Positions 126-136 are LID; that stretch reads KRFAEQGRPDD. Arg127 lines the ATP pocket. 2 residues coordinate AMP: Arg133 and Arg144. Position 172 (Ala172) interacts with ATP.

This sequence belongs to the adenylate kinase family. Monomer.

The protein localises to the cytoplasm. The enzyme catalyses AMP + ATP = 2 ADP. The protein operates within purine metabolism; AMP biosynthesis via salvage pathway; AMP from ADP: step 1/1. Its function is as follows. Catalyzes the reversible transfer of the terminal phosphate group between ATP and AMP. Plays an important role in cellular energy homeostasis and in adenine nucleotide metabolism. The polypeptide is Adenylate kinase (Caulobacter sp. (strain K31)).